A 428-amino-acid polypeptide reads, in one-letter code: Beta-1,3-galactosyl-O-glycosyl-glycoprotein beta-1,6-N-acetylglucosaminyltransferase (428 aa).

The Cytoplasmic segment spans residues 1–9 (MLRTLLRRR). The mediates interaction with GOLPH3 and is necessary and sufficient for localization to the Golgi stretch occupies residues 5 to 9 (LLRRR). A helical; Signal-anchor for type II membrane protein membrane pass occupies residues 10-32 (LFSYPTKYYFMVLVLSLITFSVL). The stem region stretch occupies residues 33 to 121 (RIHQKPEFVS…EPLSKEEAEF (89 aa)). The Lumenal portion of the chain corresponds to 33 to 428 (RIHQKPEFVS…RHKALETLKH (396 aa)). Asn58 and Asn95 each carry an N-linked (GlcNAc...) asparagine glycan. Cystine bridges form between Cys59–Cys413, Cys100–Cys172, Cys151–Cys199, and Cys372–Cys381. A catalytic region spans residues 122-428 (PIAYSIVVHH…RHKALETLKH (307 aa)). UDP-N-acetyl-alpha-D-glucosamine is bound by residues 128 to 130 (VVH), 155 to 157 (DTK), and Tyr187. 6 residues coordinate a glycoprotein: Glu243, Lys251, Arg254, Glu320, Lys341, and Tyr358. Glu320 serves as the catalytic Nucleophile. Arg378 and Lys401 together coordinate UDP-N-acetyl-alpha-D-glucosamine.

Belongs to the glycosyltransferase 14 family. In terms of assembly, interacts with GOLPH3; may control GCNT1 retention in the Golgi. As to expression, highly expressed in activated T-lymphocytes and myeloid cells.

The protein localises to the golgi apparatus membrane. It catalyses the reaction a 3-O-[beta-D-galactosyl-(1-&gt;3)-N-acetyl-alpha-D-galactosaminyl]-L-seryl-[protein] + UDP-N-acetyl-alpha-D-glucosamine = 3-O-{beta-D-galactosyl-(1-&gt;3)-[N-acetyl-beta-D-glucosaminyl-(1-&gt;6)]-N-acetyl-alpha-D-galactosaminyl}-L-seryl-[protein] + UDP + H(+). The catalysed reaction is a 3-O-[beta-D-galactosyl-(1-&gt;3)-N-acetyl-alpha-D-galactosaminyl]-L-threonyl-[protein] + UDP-N-acetyl-alpha-D-glucosamine = a 3-O-{beta-D-galactosyl-(1-&gt;3)-[N-acetyl-beta-D-glucosaminyl-(1-&gt;6)]-N-acetyl-alpha-D-galactosaminyl}-L-threonyl-[protein] + UDP + H(+). The enzyme catalyses a globoside GalGb4Cer + UDP-N-acetyl-alpha-D-glucosamine = a globoside GlcNAc-(beta1-&gt;6)-GalGb4Cer + UDP + H(+). It carries out the reaction a ganglioside GA1 + UDP-N-acetyl-alpha-D-glucosamine = a ganglioside beta-D-GlcNAc-(1-&gt;6)-GA1 + UDP + H(+). It participates in protein modification; protein glycosylation. It functions in the pathway glycolipid biosynthesis. Functionally, glycosyltransferase that catalyzes the transfer of an N-acetylglucosamine (GlcNAc) moiety in beta1-6 linkage from UDP-GlcNAc onto mucin-type core 1 O-glycan to form the branched mucin-type core 2 O-glycan. The catalysis is metal ion-independent and occurs with inversion of the anomeric configuration of sugar donor. Selectively involved in synthesis of mucin-type core 2 O-glycans that serve as scaffolds for the display of selectin ligand sialyl Lewis X epitope by myeloid cells, with an impact on homeostasis and recruitment to inflammatory sites. Can also act on glycolipid substrates. Transfers GlcNAc moiety to GalGb4Cer globosides in a reaction step to the synthesis of stage-specific embryonic antigen 1 (SSEA-1) determinant. Can use Galbeta1-3GalNAcalpha1- and Galbeta1-3GalNAcbeta1- oligosaccharide derivatives as acceptor substrates. This is Beta-1,3-galactosyl-O-glycosyl-glycoprotein beta-1,6-N-acetylglucosaminyltransferase (GCNT1) from Homo sapiens (Human).